A 131-amino-acid chain; its full sequence is Profilin-2 (131 aa).

This sequence belongs to the profilin family. Occurs in many kinds of cells as a complex with monomeric actin in a 1:1 ratio.

Its subcellular location is the cytoplasm. It is found in the cytoskeleton. Binds to actin and affects the structure of the cytoskeleton. At high concentrations, profilin prevents the polymerization of actin, whereas it enhances it at low concentrations. By binding to PIP2, it inhibits the formation of IP3 and DG. The protein is Profilin-2 of Solanum lycopersicum (Tomato).